Reading from the N-terminus, the 291-residue chain is Prolyl 4-hydroxylase 5 (291 aa).

The Cytoplasmic portion of the chain corresponds to 1–22; it reads MASKSKQHLRYQPRKSVSRSTQ. The helical; Signal-anchor for type II membrane protein transmembrane segment at 23 to 43 threads the bilayer; sequence AFTVLILLLVVILILLGLGIL. Over 44 to 291 the chain is Extracellular; the sequence is SLPNANRNSS…KWFHVHEFKV (248 aa). An N-linked (GlcNAc...) asparagine glycan is attached at N51. The region spanning 163-286 is the Fe2OG dioxygenase domain; sequence NGEGLQVLHY…KWSSTKWFHV (124 aa). The Fe cation site is built by H181 and D183. N-linked (GlcNAc...) asparagine glycosylation is present at N222. H267 contributes to the Fe cation binding site. K277 contributes to the 2-oxoglutarate binding site.

This sequence belongs to the P4HA family. The cofactor is Fe(2+). L-ascorbate is required as a cofactor. Expressed in epidermal root hair cells (trichoblasts).

Its subcellular location is the endoplasmic reticulum membrane. The protein localises to the golgi apparatus membrane. It catalyses the reaction L-prolyl-[collagen] + 2-oxoglutarate + O2 = trans-4-hydroxy-L-prolyl-[collagen] + succinate + CO2. Functionally, catalyzes the post-translational formation of 4-hydroxyproline in -Xaa-Pro-Gly- sequences in proline-rich peptide sequences of plant glycoproteins and other proteins. Hydroxyprolines are important constituent of many plant cell wall glycoproteins such as extensins, hydroxyproline-rich glycoproteins, lectins and arabinogalactan proteins. Possesses high affinity for leucine-rich repeat and proline-rich extensins of root cell walls that are essential for root hair development. Hydroxyprolines define the subsequent O-glycosylation sites by arabinosyltransferases which elongate the O-arabinosides on extensins. The protein is Prolyl 4-hydroxylase 5 of Arabidopsis thaliana (Mouse-ear cress).